The sequence spans 481 residues: uncharacterized protein (481 aa).

A run of 10 helical transmembrane segments spans residues 30–50 (TIII…FVQF), 96–116 (AIAL…FIGM), 154–174 (CMAV…FNSV), 196–216 (ISLV…IAII), 220–240 (LVPM…GMHI), 250–270 (IVQS…ALVS), 311–331 (MLGV…IILL), 354–374 (IGEF…YSSI), 391–411 (KPWL…FGAV), and 424–444 (VMAV…PIVW).

This sequence belongs to the alanine or glycine:cation symporter (AGCS) (TC 2.A.25) family.

It is found in the cell inner membrane. This is an uncharacterized protein from Haemophilus influenzae (strain ATCC 51907 / DSM 11121 / KW20 / Rd).